A 495-amino-acid chain; its full sequence is BUB3-interacting and GLEBS motif-containing protein ZNF207 (495 aa).

Residues 1–92 form a microtubule-binding region region; it reads MGRKKKKQLK…EGIPEKDMDE (92 aa). C2H2-type zinc fingers lie at residues 11–34 and 35–58; these read PWCW…KAKH and FKCH…MQVH. Over residues 99-111 the composition is skewed to basic and acidic residues; sequence QKTQESQKKKQQD. 3 disordered regions span residues 99–161, 252–292, and 316–372; these read QKTQ…PGIP, PPAP…SNSE, and VGTD…ATLT. A compositionally biased stretch (acidic residues) spans 112–121; that stretch reads DSDEYDDDES. The span at 127–136 shows a compositional bias: polar residues; sequence FQPQPVQPQQ. The segment covering 142 to 161 has biased composition (pro residues); the sequence is MAQPGLPPVPGAPGMPPGIP. Composition is skewed to low complexity over residues 283–292 and 326–372; these read SSSTASSNSE and TPAA…ATLT. Residues 376–408 are GLEBS; that stretch reads ATSKLIHPDEDISLEERRAQLPKYQRNLPRPGQ. Residues 462 to 495 are disordered; that stretch reads PYGQGPPMVPPYQGGPPRPPMGMRPPVMSQGGRY. Over residues 464–484 the composition is skewed to pro residues; that stretch reads GQGPPMVPPYQGGPPRPPMGM.

As to quaternary structure, interacts (via GLEBS region) with BUB3. In terms of tissue distribution, in day-13 embryo, strongly expressed in the nervous system (brain, spinal cord and dorsal root ganglia), with strong to weak expression in other regions. Continues to be strongly expressed in the neonatal brain while expression is weak in the brain and spinal cord of adult.

The protein resides in the nucleus. It localises to the chromosome. Its subcellular location is the centromere. It is found in the kinetochore. The protein localises to the cytoplasm. The protein resides in the cytoskeleton. It localises to the spindle. Its function is as follows. Kinetochore- and microtubule-binding protein that plays a key role in spindle assembly. ZNF207/BuGZ is mainly composed of disordered low-complexity regions and undergoes phase transition or coacervation to form temperature-dependent liquid droplets. Coacervation promotes microtubule bundling and concentrates tubulin, promoting microtubule polymerization and assembly of spindle and spindle matrix by concentrating its building blocks. Also acts as a regulator of mitotic chromosome alignment by mediating the stability and kinetochore loading of BUB3. Mechanisms by which BUB3 is protected are unclear: according to a first report, ZNF207/BuGZ may act by blocking ubiquitination and proteasomal degradation of BUB3. According to another report, the stabilization is independent of the proteasome. The sequence is that of BUB3-interacting and GLEBS motif-containing protein ZNF207 from Mus musculus (Mouse).